Here is a 269-residue protein sequence, read N- to C-terminus: Ribosomal RNA small subunit methyltransferase A (269 aa).

S-adenosyl-L-methionine is bound by residues histidine 11, leucine 13, glycine 38, glutamate 59, aspartate 84, and asparagine 105.

The protein belongs to the class I-like SAM-binding methyltransferase superfamily. rRNA adenine N(6)-methyltransferase family. RsmA subfamily.

It is found in the cytoplasm. The enzyme catalyses adenosine(1518)/adenosine(1519) in 16S rRNA + 4 S-adenosyl-L-methionine = N(6)-dimethyladenosine(1518)/N(6)-dimethyladenosine(1519) in 16S rRNA + 4 S-adenosyl-L-homocysteine + 4 H(+). In terms of biological role, specifically dimethylates two adjacent adenosines (A1518 and A1519) in the loop of a conserved hairpin near the 3'-end of 16S rRNA in the 30S particle. May play a critical role in biogenesis of 30S subunits. This Acaryochloris marina (strain MBIC 11017) protein is Ribosomal RNA small subunit methyltransferase A.